The primary structure comprises 448 residues: MSEKAFVTVTALTKYIKRKFDVDPHLEDIWIKGELSNVKIHSRGHVYFTLKDENARMQAVMFQRSAAKLPFSPKSGMKVFVRGGIQVYEPSGNYQLYAKEMQPDGVGALHLAYEELKKKLASEGLFDARYKKPIPEYPEVVGVITSPTGAAVRDVITTINRRYQQAKIIVLPALVQGEHATRSIVERIKEANEKQLCDVLIVGRGGGSIEELWAFNEEAVARAIFASDIPIISAVGHETDFTISDFTADMRAPTPTGAAELAVPSTTDLIERIKSIDIRLTRAVKNQTSQAKDRLLALQSSYAFRFPKRLQEQKEQQFDLVFDRFQKQLTRQIEQKRSQLDRQTYRLKPLHPKEQLLQAKKRHANETEQLIRSMNVQMKTIHSQFQSVLGKLNALNPLQVMERGYSLAYKEDELIKSVNQVETKDQLTITMKDGRLICEVIEKEGQSS.

This sequence belongs to the XseA family. Heterooligomer composed of large and small subunits.

The protein localises to the cytoplasm. It carries out the reaction Exonucleolytic cleavage in either 5'- to 3'- or 3'- to 5'-direction to yield nucleoside 5'-phosphates.. Its function is as follows. Bidirectionally degrades single-stranded DNA into large acid-insoluble oligonucleotides, which are then degraded further into small acid-soluble oligonucleotides. The protein is Exodeoxyribonuclease 7 large subunit of Bacillus pumilus (strain SAFR-032).